Reading from the N-terminus, the 78-residue chain is Large ribosomal subunit protein bL28 (78 aa).

The interval 1–20 (MSQVCQVTGKRPVVGNNRSH) is disordered.

It belongs to the bacterial ribosomal protein bL28 family.

In Idiomarina loihiensis (strain ATCC BAA-735 / DSM 15497 / L2-TR), this protein is Large ribosomal subunit protein bL28.